The primary structure comprises 446 residues: Immunoglobulin heavy constant gamma 3 (446 aa).

Residues 1–98 are CH1; the sequence is ASTKGPSVFP…PSNTKVDKRV (98 aa). Residues 1–397 lie on the Extracellular side of the membrane; that stretch reads ASTKGPSVFP…DGELDGLWTT (397 aa). In terms of domain architecture, Ig-like 1 spans 6 to 99; sequence PSVFPLAPCS…SNTKVDKRVE (94 aa). Residues cysteine 27 and cysteine 83 are joined by a disulfide bond. The interval 99-160 is hinge; it reads ELKTPLGDTT…DTPPPCPRCP (62 aa). 3 repeats span residues 116-130, 131-145, and 146-160; these read EPKSCDTPPPCPRCP. Residues threonine 122, threonine 137, and threonine 152 are each glycosylated (O-linked (GalNAc...) threonine). The interval 161–270 is CH2; sequence APELLGGPSV…PIEKTISKTK (110 aa). 2 Ig-like domains span residues 168-267 and 276-372; these read PSVF…KTIS and PQVY…KSLS. 2 cysteine pairs are disulfide-bonded: cysteine 191–cysteine 251 and cysteine 297–cysteine 355. 2 N-linked (GlcNAc...) asparagine glycosylation sites follow: asparagine 227 and asparagine 322. The interval 271 to 376 is CH3; the sequence is GQPREPQVYT…TQKSLSLSPE (106 aa). Residues 398 to 418 form a helical membrane-spanning segment; sequence ITIFITLFLLSVCYSATVTFF. Over 419–446 the chain is Cytoplasmic; sequence KVKWIFSSVVDLKQTIIPDYRNMIGQGA.

Immunoglobulins are composed of two identical heavy chains and two identical light chains; disulfide-linked. N-linked glycans at Asn-322 are noncore fucosylated and the vast majority are diantennary species with a bisecting GlcNAc. Among them the most dominant glycans are HexNAc5Hex4, HexNAc5Hex5, and HexNAc5Hex5Sia1. Post-translationally, N-linked glycans at Asn-227 are diantennary core fucosylated structures without bisecting GlcNAc (HexNAc4Hex4Fuc1, HexNAc4Hex5Fuc1, and HexNAc4Hex5Fuc1Sia1). Glycosylation on Asn-227 is required for interaction with Fc receptors and ability to activate the complement pathway. In terms of processing, (Microbial infection) Deglycosylation on Asn-227 by S.pyogenes EndoS or Endos2 endoglucosidases prevents interaction between immunoglobulin-gamma (IgG) and Fc receptors, impairing ability to activate the complement pathway. O-linked glycans are non-, mono- and disialylated core 1-type O-glycans.

The protein localises to the secreted. The protein resides in the cell membrane. Constant region of immunoglobulin heavy chains. Immunoglobulins, also known as antibodies, are membrane-bound or secreted glycoproteins produced by B lymphocytes. In the recognition phase of humoral immunity, the membrane-bound immunoglobulins serve as receptors which, upon binding of a specific antigen, trigger the clonal expansion and differentiation of B lymphocytes into immunoglobulins-secreting plasma cells. Secreted immunoglobulins mediate the effector phase of humoral immunity, which results in the elimination of bound antigens. The antigen binding site is formed by the variable domain of one heavy chain, together with that of its associated light chain. Thus, each immunoglobulin has two antigen binding sites with remarkable affinity for a particular antigen. The variable domains are assembled by a process called V-(D)-J rearrangement and can then be subjected to somatic hypermutations which, after exposure to antigen and selection, allow affinity maturation for a particular antigen. The polypeptide is Immunoglobulin heavy constant gamma 3 (Homo sapiens (Human)).